The chain runs to 49 residues: Large ribosomal subunit protein bL33 (49 aa).

It belongs to the bacterial ribosomal protein bL33 family.

The protein is Large ribosomal subunit protein bL33 of Lachnoclostridium phytofermentans (strain ATCC 700394 / DSM 18823 / ISDg) (Clostridium phytofermentans).